The following is a 288-amino-acid chain: GDSL esterase/lipase At3g43550 (288 aa).

The signal sequence occupies residues 1–19 (MKLQIIWLALVLIAVETYA). The N-linked (GlcNAc...) asparagine glycan is linked to N25. S37 serves as the catalytic Nucleophile.

Belongs to the 'GDSL' lipolytic enzyme family.

Its subcellular location is the secreted. The protein is GDSL esterase/lipase At3g43550 of Arabidopsis thaliana (Mouse-ear cress).